The sequence spans 107 residues: Endonuclease ALBA3 (107 aa).

N6-acetyllysine occurs at positions 23 and 32.

It belongs to the histone-like Alba family. As to quaternary structure, homodimer. Interacts (acetylated and unacetylated) with Sir2A. It depends on a divalent metal cation as a cofactor. In terms of processing, acetylated. Exists in both acetylated and unacetylated forms but predominantly in an acetylated form. Deacetylated by Sir2A.

It is found in the nucleus. Its subcellular location is the chromosome. The protein localises to the telomere. The protein resides in the cytoplasm. Mild acetylation lowers protein interaction with DNA and high acetylation abolishes DNA-binding activity. DNA binding and endonuclease activity is modulated via deacetylation of Lys-23 by Sir2A. Inhibited in the presence of EDTA and EGTA. In terms of biological role, possesses DNA-binding and endonuclease activities. Binds DNA cooperatively in sequence-independent manner at the DNA minor groove. Exhibits apurinic/apyrimidinic site-driven endonuclease activity. Binds RNA; shows high affinity for poly(A) and a lower affinity for poly(U) templates. In vitro, prevents transcription after DNA binding. Associates with the telomeric region, the subtelomeric TARE6 repeat sequence and the var gene promoters. The sequence is that of Endonuclease ALBA3 from Plasmodium falciparum (isolate 3D7).